The primary structure comprises 1113 residues: Carbamoyl phosphate synthase arginine-specific large chain (1113 aa).

The tract at residues 23-420 (QLIKGIDSVL…AFQKAFRQVD (398 aa)) is carboxyphosphate synthetic domain. Residues Arg150, Arg190, Gly196, Gly197, Lys227, Leu229, Glu234, Gly260, Ile261, His262, Gln303, and Glu317 each contribute to the ATP site. The 193-residue stretch at 154-346 (ARALKEINMP…LAYTAAKIAL (193 aa)) folds into the ATP-grasp 1 domain. The Mg(2+) site is built by Gln303, Glu317, and Asn319. Positions 303, 317, and 319 each coordinate Mn(2+). The segment at 421–568 (PSLLGFQGSD…YVTYNAVKDD (148 aa)) is oligomerization domain. Residues 569–955 (VTFGDNGIMV…SYWVALQGLM (387 aa)) form a carbamoyl phosphate synthetic domain region. The 196-residue stretch at 693 to 888 (STILDTLGLD…FVEIAVKAFL (196 aa)) folds into the ATP-grasp 2 domain. ATP is bound by residues Arg729, Lys768, Ile770, Glu775, Gly800, Val801, His802, Ser803, Gln843, and Glu859. Residues Gln843, Glu859, and Asn861 each coordinate Mg(2+). 3 residues coordinate Mn(2+): Gln843, Glu859, and Asn861. The tract at residues 956–1097 (SFCVPLPPSG…EMRQSDGPET (142 aa)) is allosteric domain. Positions 957–1113 (FCVPLPPSGI…WREYLGFKPT (157 aa)) constitute an MGS-like domain.

The protein belongs to the CarB family. As to quaternary structure, heterodimer composed of 2 chains; the small (or glutamine) chain promotes the hydrolysis of glutamine to ammonia, which is used by the large (or ammonia) chain to synthesize carbamoyl phosphate. Requires Mg(2+) as cofactor. Mn(2+) serves as cofactor.

Its subcellular location is the cytoplasm. It catalyses the reaction hydrogencarbonate + L-glutamine + 2 ATP + H2O = carbamoyl phosphate + L-glutamate + 2 ADP + phosphate + 2 H(+). The enzyme catalyses hydrogencarbonate + NH4(+) + 2 ATP = carbamoyl phosphate + 2 ADP + phosphate + 2 H(+). The protein operates within amino-acid biosynthesis; L-arginine biosynthesis; carbamoyl phosphate from bicarbonate: step 1/1. Large subunit of the arginine-specific carbamoyl phosphate synthase (CPSase). CPSase catalyzes the formation of carbamoyl phosphate from the ammonia moiety of glutamine, hydrogencarbonate, and phosphate donated by ATP, constituting the first step of 2 biosynthetic pathways, one leading to arginine and/or urea and the other to pyrimidine nucleotides. The large subunit (synthetase) binds the substrates ammonia (free or transferred from glutamine from the small subunit), hydrogencarbonate and ATP and carries out an ATP-coupled ligase reaction, activating hydrogencarbonate by forming carboxy phosphate which reacts with ammonia to form carbamoyl phosphate. The polypeptide is Carbamoyl phosphate synthase arginine-specific large chain (CPA2) (Eremothecium gossypii (strain ATCC 10895 / CBS 109.51 / FGSC 9923 / NRRL Y-1056) (Yeast)).